The chain runs to 909 residues: Probable DNA-directed RNA polymerase subunit beta (909 aa).

Belongs to the RNA polymerase beta chain family.

It carries out the reaction RNA(n) + a ribonucleoside 5'-triphosphate = RNA(n+1) + diphosphate. Its function is as follows. Required for late and very late gene expression. May be a component of the novel RNA polymerase activity induced by baculovirus infection. In Lepidoptera (butterflies and moths), this protein is Probable DNA-directed RNA polymerase subunit beta (LEF-8).